The sequence spans 235 residues: Ubiquinone biosynthesis O-methyltransferase (235 aa).

4 residues coordinate S-adenosyl-L-methionine: R39, G59, D80, and M124.

This sequence belongs to the methyltransferase superfamily. UbiG/COQ3 family.

It catalyses the reaction a 3-demethylubiquinol + S-adenosyl-L-methionine = a ubiquinol + S-adenosyl-L-homocysteine + H(+). The enzyme catalyses a 3-(all-trans-polyprenyl)benzene-1,2-diol + S-adenosyl-L-methionine = a 2-methoxy-6-(all-trans-polyprenyl)phenol + S-adenosyl-L-homocysteine + H(+). It functions in the pathway cofactor biosynthesis; ubiquinone biosynthesis. Functionally, O-methyltransferase that catalyzes the 2 O-methylation steps in the ubiquinone biosynthetic pathway. The polypeptide is Ubiquinone biosynthesis O-methyltransferase (Vibrio vulnificus (strain CMCP6)).